Reading from the N-terminus, the 694-residue chain is Methionine--tRNA ligase (694 aa).

The 'HIGH' region signature appears at 12 to 22; that stretch reads PYANGPLHLGH. Cys-143, Cys-146, Cys-156, and Cys-159 together coordinate Zn(2+). The 'KMSKS' region motif lies at 330–334; that stretch reads KMSKS. Lys-333 contacts ATP. The span at 550 to 575 shows a compositional bias: low complexity; sequence LAAPAAPATTSKAAPAKPDTKPAAAA. A disordered region spans residues 550-580; it reads LAAPAAPATTSKAAPAKPDTKPAAAANPQSP. The 104-residue stretch at 591–694 folds into the tRNA-binding domain; the sequence is DFAKLDLRIG…SGAQPGMPVR (104 aa).

Belongs to the class-I aminoacyl-tRNA synthetase family. MetG type 1 subfamily. In terms of assembly, homodimer. It depends on Zn(2+) as a cofactor.

It is found in the cytoplasm. The enzyme catalyses tRNA(Met) + L-methionine + ATP = L-methionyl-tRNA(Met) + AMP + diphosphate. In terms of biological role, is required not only for elongation of protein synthesis but also for the initiation of all mRNA translation through initiator tRNA(fMet) aminoacylation. This Xanthomonas oryzae pv. oryzae (strain MAFF 311018) protein is Methionine--tRNA ligase.